Here is a 289-residue protein sequence, read N- to C-terminus: MSANAEAQCGSISEDNTHSSTTCQGYVLPEGKIMPNTVFVGGIDIRMNEAEIRSYFEQYGTVKEVKIITDRTGVSKGYGFVSFLDNVDVQKIVESQISVHGKRLKLGPAIRKQQNLCSYMQPRPLAFNPPAPQFHSVWTNQNTETYVQPQAVVSPLTQYVQTYAYSSPAVLIQQQVPVGYQPAYNYQAPPQWVPGEQRNYVMPPVYTSVNYHYSEDPEFIQTECAVPEPTQMSGNSPQKKSVDRSIQTVVSCLFNPENRLRNTFVSQEDYFRERRAHHFRKGRAVLKSV.

The disordered stretch occupies residues 1-20 (MSANAEAQCGSISEDNTHSS). Residues 36 to 117 (NTVFVGGIDI…PAIRKQQNLC (82 aa)) form the RRM domain. Residues 162–187 (TYAYSSPAVLIQQQVPVGYQPAYNYQ) form the DAZ domain.

This sequence belongs to the RRM DAZ family.

The protein localises to the cytoplasm. RNA-binding protein, which probably plays a central role in gametogenesis in both males and females. Acts by binding to the 3'-UTR of mRNA, specifically recognizing GUU triplets, and promoting the translation of key transcripts. This Gallus gallus (Chicken) protein is Deleted in azoospermia-like (DAZL).